Here is a 522-residue protein sequence, read N- to C-terminus: Transcription factor SPT20 homolog (522 aa).

The residue at position 284 (Ser284) is a Phosphoserine. Disordered regions lie at residues 361–380 (DEESDSQMSPSHSSTDDHSN) and 408–522 (PVKM…RHES). Low complexity predominate over residues 412-425 (SHSSSGSASLSQVS). Polar residues predominate over residues 433–442 (TETVSVQSSV). Positions 458 to 467 (SSSGNSSSGN) are enriched in low complexity. Over residues 481 to 492 (PTPPPSSKPPTI) the composition is skewed to pro residues. The residue at position 482 (Thr482) is a Phosphothreonine. Residues 506–522 (LSPAALSPASSSQRHES) are compositionally biased toward low complexity. Residues Ser507 and Ser512 each carry the phosphoserine modification.

Belongs to the SPT20 family. Interacts with ATG9A. Interacts with MAPK14.

Required for MAP kinase p38 (MAPK11, MAPK12, MAPK13 and/or MAPK14) activation during gastrulation. Required for down-regulation of E-cadherin during gastrulation by regulating E-cadherin protein level downstream from NCK-interacting kinase (NIK) and independently of the regulation of transcription by FGF signaling and Snail. Required for starvation-induced ATG9A trafficking during autophagy. The chain is Transcription factor SPT20 homolog (SUPT20H) from Pongo abelii (Sumatran orangutan).